The following is a 706-amino-acid chain: Fatty acid oxidation complex subunit alpha (706 aa).

The interval 1 to 188 (MEKTFNLTRR…KMGLVNDVVP (188 aa)) is enoyl-CoA hydratase. Positions 308 to 706 (RKVKKAVILG…TMARENVSFF (399 aa)) are 3-hydroxyacyl-CoA dehydrogenase.

In the N-terminal section; belongs to the enoyl-CoA hydratase/isomerase family. It in the central section; belongs to the 3-hydroxyacyl-CoA dehydrogenase family. Heterotetramer of two alpha chains (FadJ) and two beta chains (FadI).

The protein localises to the cytoplasm. The enzyme catalyses a (3S)-3-hydroxyacyl-CoA = a (2E)-enoyl-CoA + H2O. It carries out the reaction a 4-saturated-(3S)-3-hydroxyacyl-CoA = a (3E)-enoyl-CoA + H2O. It catalyses the reaction a (3S)-3-hydroxyacyl-CoA + NAD(+) = a 3-oxoacyl-CoA + NADH + H(+). The catalysed reaction is (3S)-3-hydroxybutanoyl-CoA = (3R)-3-hydroxybutanoyl-CoA. The protein operates within lipid metabolism; fatty acid beta-oxidation. Functionally, catalyzes the formation of a hydroxyacyl-CoA by addition of water on enoyl-CoA. Also exhibits 3-hydroxyacyl-CoA epimerase and 3-hydroxyacyl-CoA dehydrogenase activities. The protein is Fatty acid oxidation complex subunit alpha of Shewanella putrefaciens (strain CN-32 / ATCC BAA-453).